The primary structure comprises 629 residues: Solute carrier family 22 member 14 (629 aa).

Positions 1 to 21 (MKEDQNYKTAFGSQNSRDTHR) are disordered. Residues 1-67 (MKEDQNYKTA…IGEFGTFQWR (67 aa)) lie on the Cytoplasmic side of the membrane. Positions 7–16 (YKTAFGSQNS) are enriched in polar residues. A helical membrane pass occupies residues 68 to 88 (LVVLTFIPSILSTFFIFSHHF). Topologically, residues 89 to 183 (LLTAQRPYCN…LVCGNEPNKE (95 aa)) are extracellular. Residues Asn98, Asn116, Asn124, and Asn149 are each glycosylated (N-linked (GlcNAc...) asparagine). Residues 184-204 (NGLTVFLSGVLTGSLLFGFLS) traverse the membrane as a helical segment. Residues 205 to 209 (DKLGR) lie on the Cytoplasmic side of the membrane. A helical transmembrane segment spans residues 210–230 (YPIILLSLLGFLIFGFGTAFV). Residues 231-240 (SSFYQYLFFR) are Extracellular-facing. Residues 241–261 (FFVAQASVGYAICSVSLVMEW) form a helical membrane-spanning segment. Residues 262–269 (LVGEHRAQ) are Cytoplasmic-facing. A helical membrane pass occupies residues 270–290 (AVILQHSFLTIGVILLTGLAY). The Extracellular segment spans residues 291–295 (KVVHW). Residues 296–316 (RLLCLLGGMPMFPLICNIWVL) form a helical membrane-spanning segment. The Cytoplasmic portion of the chain corresponds to 317–378 (RESPRWLMVR…DFCTNQHLFK (62 aa)). Residues 379 to 399 (VVLAIGCVWFTVSYISFTLNL) form a helical membrane-spanning segment. Residues 400–409 (KMNDFGLDVY) are Extracellular-facing. Residues 410 to 430 (FVQMVRSIVAVPARLCCIILL) traverse the membrane as a helical segment. The Cytoplasmic portion of the chain corresponds to 431 to 436 (EYFGRK). A helical transmembrane segment spans residues 437 to 457 (WALNLTLFLVTSMCLFLLFLP). Residues 458–463 (QEPKST) are Extracellular-facing. A helical transmembrane segment spans residues 464–484 (IILTLMLAEFSMAGTLSIFFI). Over 485–496 (YTAELLPTVLRS) the chain is Cytoplasmic. A helical transmembrane segment spans residues 497-517 (TGLGMVSLAWVAGAISSVAIF). The Extracellular portion of the chain corresponds to 518-523 (KQTKTQ). A helical transmembrane segment spans residues 524–544 (LPIFFCCLCCVLALCFSSLVP). Over 545 to 629 (ETGSQSLRDS…PVQSLKAQPP (85 aa)) the chain is Cytoplasmic.

Belongs to the major facilitator (TC 2.A.1) superfamily. Organic cation transporter (TC 2.A.1.19) family. Testis-specific (at protein level). Specifically expressed in male germ cells (at protein level).

Its subcellular location is the mitochondrion inner membrane. The protein resides in the cell projection. It is found in the cilium. It localises to the flagellum membrane. The enzyme catalyses riboflavin(in) = riboflavin(out). In terms of biological role, riboflavin transporter localized at the inner mitochondrial membrane of the spermatozoa midpiece, which is required for male fertility. SLC22A14-mediated riboflavin transport is essential for spermatozoa energy generation and motility: riboflavin is the precursor of FMN and FAD, which are coenzymes of many enzymes in the TCA cycle (the citric acid cycle) in mitochondria. Required for sperm motility and normal sperm flagellar structure. This is Solute carrier family 22 member 14 from Mus musculus (Mouse).